We begin with the raw amino-acid sequence, 637 residues long: Transmembrane 9 superfamily member 10 (637 aa).

The signal sequence occupies residues 1–23 (MAKVRILIFTLVLFFSLNVHIHG). Topologically, residues 24 to 274 (FYLPGVAPQD…YLLMADDQIH (251 aa)) are lumenal. The helical transmembrane segment at 275–295 (WFSIVNSMMIVLFLSGMVAMI) threads the bilayer. Topologically, residues 296 to 344 (MLRTLYRDISNYNQLESHEEALEETGWKLVHGDVFRPPTNPELLCVYAG) are cytoplasmic. Residues 345–365 (TGVQCFGMILVTMIFACLGFL) form a helical membrane-spanning segment. The Lumenal segment spans residues 366-370 (SPSNR). The chain crosses the membrane as a helical span at residues 371–391 (GGLMTAMLLLWVFMGLLAGYA). The Cytoplasmic segment spans residues 392 to 411 (SSRLYKTLRGTEWKRNALKT). Residues 412–432 (AFMFPATVFVAFFVLNAIIWG) form a helical membrane-spanning segment. Residues 433 to 444 (QKSSGAVPFGTM) lie on the Lumenal side of the membrane. A helical membrane pass occupies residues 445 to 465 (FALVVLWFGISVPLVFIGGYI). The Cytoplasmic portion of the chain corresponds to 466–494 (GFRKPAPEDPVKTNKIPRQIPTQAWYMNP). Residues 495-515 (IFSILIGGILPFGAVFIELFF) traverse the membrane as a helical segment. The Lumenal portion of the chain corresponds to 516 to 527 (ILTSIWLHQFYY). A helical membrane pass occupies residues 528–548 (IFGFLFIVFIILIITCAEITV). At 549 to 566 (VLCYFQLCSEDYQWWWRS) the chain is on the cytoplasmic side. Residues 567–587 (YLTSGSSAVYLFLYAVFYFYT) traverse the membrane as a helical segment. Residues 588-593 (KLEITK) are Lumenal-facing. A helical membrane pass occupies residues 594–614 (LVSAVLYFGYMLIVSYVFFVF). Residues 615–637 (TGAIGFYACFWFTRLIYSSVKID) are Cytoplasmic-facing. Positions 626–631 (FTRLIY) match the Endoplasmic reticulum export signal motif. The Golgi retention signal signature appears at 635-637 (KID).

This sequence belongs to the nonaspanin (TM9SF) (TC 9.A.2) family.

The protein resides in the endosome membrane. The protein localises to the golgi apparatus membrane. This Arabidopsis thaliana (Mouse-ear cress) protein is Transmembrane 9 superfamily member 10.